Here is a 1119-residue protein sequence, read N- to C-terminus: Leucine-rich repeats and immunoglobulin-like domains protein 3 (1119 aa).

A signal peptide spans 1–24 (MSAPSLRARAAGLGLLLCAVLGRA). The LRRNT domain maps to 38–74 (PSGVAAERPCPTTCRCLGDLLDCSRKRLARLPEPLPS). 15 LRR repeats span residues 75–96 (WVAR…SMSH), 99–120 (SLRE…GPVS), 122–142 (NITL…EHLK), 146–167 (SLET…FPAL), 168–189 (QLKY…YFDN), 193–214 (TLLV…MFKL), 216–237 (QLQH…TFQG), 240–261 (ALKS…AFWG), 264–285 (NMEI…WLYG), 288–309 (MLQE…AWEF), 312–333 (KLSE…SFLG), 336–357 (LLNT…AFRG), 360–382 (SLKT…NGAF), 387–408 (KLRR…AFTG), and 411–432 (ALEH…AFSQ). N-linked (GlcNAc...) asparagine glycans are attached at residues Asn122 and Asn156. N-linked (GlcNAc...) asparagine glycosylation occurs at Asn274. Residues Asn442, Asn469, and Asn515 are each glycosylated (N-linked (GlcNAc...) asparagine). In terms of domain architecture, LRRCT spans 444–495 (SSLLCDCQLKWLPQWVAENNFQSFVNASCAHPQLLKGRSIFAVSPDGFVCDD). 3 consecutive Ig-like C2-type domains span residues 499 to 598 (PQIT…AKLT), 603 to 692 (PSFT…ATLT), and 697 to 783 (PSFL…VRLS). Cystine bridges form between Cys520/Cys581 and Cys624/Cys676. Residues Asn688 and Asn729 are each glycosylated (N-linked (GlcNAc...) asparagine). Cys718 and Cys767 are oxidised to a cystine. A helical transmembrane segment spans residues 810–830 (VVIIAVVCCVVGTSLVWVVII). Asn905, Asn987, Asn999, and Asn1016 each carry an N-linked (GlcNAc...) asparagine glycan. The segment at 1073 to 1093 (SSPDLDSGSEEDGKERTDFQE) is disordered. A compositionally biased stretch (basic and acidic residues) spans 1083-1093 (EDGKERTDFQE).

Interacts with EGFR, ERBB2 and ERBB4 (in vitro). As to expression, widely expressed.

It is found in the cell membrane. The protein resides in the cytoplasmic vesicle membrane. In terms of biological role, may play a role in craniofacial and inner ear morphogenesis during embryonic development. May act within the otic vesicle epithelium to control formation of the lateral semicircular canal in the inner ear, possibly by restricting the expression of NTN1. This is Leucine-rich repeats and immunoglobulin-like domains protein 3 (LRIG3) from Homo sapiens (Human).